We begin with the raw amino-acid sequence, 248 residues long: tRNA pseudouridine synthase A (248 aa).

Aspartate 52 acts as the Nucleophile in catalysis. Tyrosine 113 is a substrate binding site.

This sequence belongs to the tRNA pseudouridine synthase TruA family. As to quaternary structure, homodimer.

The catalysed reaction is uridine(38/39/40) in tRNA = pseudouridine(38/39/40) in tRNA. Functionally, formation of pseudouridine at positions 38, 39 and 40 in the anticodon stem and loop of transfer RNAs. The protein is tRNA pseudouridine synthase A of Mesorhizobium japonicum (strain LMG 29417 / CECT 9101 / MAFF 303099) (Mesorhizobium loti (strain MAFF 303099)).